The sequence spans 969 residues: RNA polymerase-associated protein RapA (969 aa).

Positions 162–339 constitute a Helicase ATP-binding domain; sequence EVGQRVAPRV…FARLALLDAD (178 aa). 175 to 182 is a binding site for ATP; the sequence is DEVGLGKT. A DEAH box motif is present at residues 285–288; the sequence is DEAH. Residues 492-663 form the Helicase C-terminal domain; the sequence is RIEWLITFLK…GFLKNPQAVG (172 aa).

Belongs to the SNF2/RAD54 helicase family. RapA subfamily. In terms of assembly, interacts with the RNAP. Has a higher affinity for the core RNAP than for the holoenzyme. Its ATPase activity is stimulated by binding to RNAP.

Its function is as follows. Transcription regulator that activates transcription by stimulating RNA polymerase (RNAP) recycling in case of stress conditions such as supercoiled DNA or high salt concentrations. Probably acts by releasing the RNAP, when it is trapped or immobilized on tightly supercoiled DNA. Does not activate transcription on linear DNA. Probably not involved in DNA repair. This is RNA polymerase-associated protein RapA from Actinobacillus pleuropneumoniae serotype 7 (strain AP76).